Consider the following 454-residue polypeptide: MDHQVSLPQSTTTGLSFKVHRQQRELVTPAKPTPRELKPLSDIDDQQGLRFQIPVIFFYRPNLSSDLDPVQVIKKALADALVYYYPFAGRLRELSNRKLAVDCTGEGVLFIEAEADVALAELEEADALLPPFPFLEELLFDVEGSSDVLNTPLLLVQVTRLKCCGFIFALRFNHTMTDGAGLSLFLKSLCELACGLHAPSVPPVWNRHLLTVSASEARVTHTHREYDDQVGIDVVATGHPLVSRSFFFRAEEISAIRKLLPPDLHNTSFEALSSFLWRCRTIALNPDPNTEMRLTCIINSRSKLRNPPLEPGYYGNVFVIPAAIATARDLIEKPLEFALRLIQETKSSVTEDYVRSVTALMATRGRPMFVASGNYIISDLRHFDLGKIDFGPWGKPVYGGTAKAGIALFPGVSFYVPFKNKKGETGTVVAISLPVRAMETFVAELNGVLNVSKG.

Active-site proton acceptor residues include His174 and Asp389.

The protein belongs to the plant acyltransferase family. In terms of tissue distribution, expressed in leaves and stems. Lower levels in flowers and barely detected in roots and siliques.

It carries out the reaction (3Z)-hex-3-en-1-ol + acetyl-CoA = (3Z)-hex-3-en-1-yl acetate + CoA. Its activity is regulated as follows. Inhibited by magnesium, calcium, cobalt, zinc and copper. Functionally, acyltransferase involved in the production of green leaf volatiles (GLVs). Uses acetyl-CoA as substrate, but not malonyl-CoA or benzoyl-CoA. Prefers primary, medium-chain-length, aliphatic alcohols. The polypeptide is (Z)-3-hexen-1-ol acetyltransferase (CHAT) (Arabidopsis thaliana (Mouse-ear cress)).